The following is a 1119-amino-acid chain: Nuclear matrix constituent protein 1 (1119 aa).

Coiled coils occupy residues 140-226 (LAEL…LYQQ) and 328-488 (LQNR…LDER). Disordered regions lie at residues 846–884 (LDVE…AEEA), 903–974 (LASA…PTGR), 989–1015 (NGAL…EIPD), and 1046–1109 (GINA…EVSM). Basic residues-rich tracts occupy residues 859–876 (GNRK…RKRS) and 920–929 (KRTRNSRKRN). Residues 1075–1085 (TPEQSRGYQNQ) are compositionally biased toward polar residues.

This sequence belongs to the CRWN family.

Its subcellular location is the nucleus matrix. The protein localises to the nucleus lamina. Its function is as follows. Architectural component of nuclear structure that plays different roles in controlling nuclear size and morphology. This is Nuclear matrix constituent protein 1 from Daucus carota subsp. sativus (Carrot).